The following is a 383-amino-acid chain: D-aspartate oxidase 3 (383 aa).

An N-terminal signal peptide occupies residues 1–17 (MLYALLLLFGGVSTVSS). FAD-binding residues include K56 and S63. N-linked (GlcNAc...) asparagine glycans are attached at residues N152, N271, and N320. T339 is an FAD binding site. A glycan (N-linked (GlcNAc...) asparagine) is linked at N371.

Belongs to the DAMOX/DASOX family. The cofactor is FAD. As to expression, in both sexes, present in coelomocytes (at protein level). Expressed in hypodermal cells and the proximal gonadal sheath cells in adult hermaphrodites (at protein level). Also expressed in probable head mesodermal cells and unidentified cells in the head, and vulval muscles in adult hermaphrodites. Expressed in the seminal vesicle, spicule and tail cells in adult males (at protein level).

Its subcellular location is the secreted. The catalysed reaction is D-aspartate + O2 + H2O = oxaloacetate + H2O2 + NH4(+). It carries out the reaction D-glutamate + O2 + H2O = H2O2 + 2-oxoglutarate + NH4(+). Its function is as follows. Selectively catalyzes the oxidative deamination of acidic amino acids. Plays a role in the egg-laying events and maturation processes of the reproductive organs. This chain is D-aspartate oxidase 3 (ddo-3), found in Caenorhabditis elegans.